We begin with the raw amino-acid sequence, 557 residues long: 2-succinyl-5-enolpyruvyl-6-hydroxy-3-cyclohexene-1-carboxylate synthase (557 aa).

It belongs to the TPP enzyme family. MenD subfamily. Homodimer. It depends on Mg(2+) as a cofactor. Mn(2+) serves as cofactor. Thiamine diphosphate is required as a cofactor.

It catalyses the reaction isochorismate + 2-oxoglutarate + H(+) = 5-enolpyruvoyl-6-hydroxy-2-succinyl-cyclohex-3-ene-1-carboxylate + CO2. The protein operates within quinol/quinone metabolism; 1,4-dihydroxy-2-naphthoate biosynthesis; 1,4-dihydroxy-2-naphthoate from chorismate: step 2/7. Its pathway is quinol/quinone metabolism; menaquinone biosynthesis. Functionally, catalyzes the thiamine diphosphate-dependent decarboxylation of 2-oxoglutarate and the subsequent addition of the resulting succinic semialdehyde-thiamine pyrophosphate anion to isochorismate to yield 2-succinyl-5-enolpyruvyl-6-hydroxy-3-cyclohexene-1-carboxylate (SEPHCHC). This chain is 2-succinyl-5-enolpyruvyl-6-hydroxy-3-cyclohexene-1-carboxylate synthase, found in Phocaeicola vulgatus (strain ATCC 8482 / DSM 1447 / JCM 5826 / CCUG 4940 / NBRC 14291 / NCTC 11154) (Bacteroides vulgatus).